A 2023-amino-acid chain; its full sequence is Protein Daple (2023 aa).

Residues 11 to 131 (NFMDSPLVVW…RMLLLILGCA (121 aa)) enclose the Calponin-homology (CH) domain. 3 coiled-coil regions span residues 250 to 415 (RQHL…LLEE), 458 to 1064 (NESA…VEKN), and 1105 to 1419 (LKQI…QYKF). A disordered region spans residues 1013-1035 (RHEEEAAHSEISQQTLGQTRSLP). Residues 1022-1033 (EISQQTLGQTRS) are compositionally biased toward polar residues. Disordered regions lie at residues 1441 to 1824 (KPKK…GSAS) and 1837 to 2023 (LRSN…YGCV). Residues 1442-1460 (PKKESSRERPDAPRERIRS) are compositionally biased toward basic and acidic residues. The span at 1478 to 1491 (SAPPPPPPPLPPRQ) shows a compositional bias: pro residues. Composition is skewed to polar residues over residues 1497-1518 (DSMN…SSPA) and 1564-1585 (TCST…SSSL). Composition is skewed to low complexity over residues 1623–1643 (SAEF…KGSL) and 1667–1704 (RLSQ…SPGS). The GBA motif lies at 1700-1728 (SSPGSEMVTLEEFLQESNALSPPTVQTGS). 4 stretches are compositionally biased toward polar residues: residues 1714–1727 (QESN…VQTG), 1752–1763 (TPTNYVTPTVKT), 1785–1799 (LTDT…QTLP), and 1809–1824 (ALQQ…GSAS). The segment covering 1890–1904 (VDPRRLSLAQPRDEF) has biased composition (basic and acidic residues). The segment covering 1927–1945 (GSGSSRAGAARSGSAQPRG) has biased composition (low complexity). Residues 1974 to 1988 (QEQREAESPLLKKAD) show a composition bias toward basic and acidic residues. Polar residues predominate over residues 1989-2014 (TTNLSYASKEQPTSKPASPDPNNDPQ). The PDZ-binding motif lies at 2020–2023 (YGCV).

This sequence belongs to the CCDC88 family.

It localises to the cytoplasm. The protein localises to the cell junction. In terms of biological role, positive regulator of Wnt signaling, acting synergistically with dvl2. Functions upstream of ctnnb1/beta-catenin in the canonical Wnt pathway, and also activates jnk in the Wnt/planar cell polarity (PCP) pathway. Acts as a non-receptor guanine nucleotide exchange factor which binds to and activates guanine nucleotide-binding protein G(i) alpha (Gi-alpha) subunits. This promotes apical cell constriction and subsequent bending of the neural plate during neurulation via arhgef18. This is Protein Daple from Danio rerio (Zebrafish).